The chain runs to 287 residues: Shikimate kinase 3, chloroplastic (287 aa).

The transit peptide at 1-57 (MDAGVGLRAKPGAWAGLGNPRRSSTARVPVRFAVEKFAQPLVLGSDRRSCGAKLKVS) directs the protein to the chloroplast. 98–105 (GMMGSGKT) is a binding site for ATP. Residue Thr-105 coordinates Mg(2+). 3 residues coordinate substrate: Asp-123, Arg-148, and Gly-170. An ATP-binding site is contributed by Arg-209.

The protein belongs to the shikimate kinase family. Requires Mg(2+) as cofactor. Expressed in panicles.

It localises to the plastid. The protein localises to the chloroplast. The catalysed reaction is shikimate + ATP = 3-phosphoshikimate + ADP + H(+). It functions in the pathway metabolic intermediate biosynthesis; chorismate biosynthesis; chorismate from D-erythrose 4-phosphate and phosphoenolpyruvate: step 5/7. Its function is as follows. Catalyzes the specific phosphorylation of the 3-hydroxyl group of shikimic acid using ATP as a cosubstrate. The polypeptide is Shikimate kinase 3, chloroplastic (SK3) (Oryza sativa subsp. japonica (Rice)).